A 616-amino-acid chain; its full sequence is Dihydroxy-acid dehydratase (616 aa).

Position 81 (D81) interacts with Mg(2+). C122 contributes to the [2Fe-2S] cluster binding site. Mg(2+) is bound by residues D123 and K124. The residue at position 124 (K124) is an N6-carboxylysine. C195 lines the [2Fe-2S] cluster pocket. E491 lines the Mg(2+) pocket. S517 functions as the Proton acceptor in the catalytic mechanism.

The protein belongs to the IlvD/Edd family. Homodimer. [2Fe-2S] cluster serves as cofactor. The cofactor is Mg(2+).

The catalysed reaction is (2R)-2,3-dihydroxy-3-methylbutanoate = 3-methyl-2-oxobutanoate + H2O. It carries out the reaction (2R,3R)-2,3-dihydroxy-3-methylpentanoate = (S)-3-methyl-2-oxopentanoate + H2O. It functions in the pathway amino-acid biosynthesis; L-isoleucine biosynthesis; L-isoleucine from 2-oxobutanoate: step 3/4. It participates in amino-acid biosynthesis; L-valine biosynthesis; L-valine from pyruvate: step 3/4. Its function is as follows. Functions in the biosynthesis of branched-chain amino acids. Catalyzes the dehydration of (2R,3R)-2,3-dihydroxy-3-methylpentanoate (2,3-dihydroxy-3-methylvalerate) into 2-oxo-3-methylpentanoate (2-oxo-3-methylvalerate) and of (2R)-2,3-dihydroxy-3-methylbutanoate (2,3-dihydroxyisovalerate) into 2-oxo-3-methylbutanoate (2-oxoisovalerate), the penultimate precursor to L-isoleucine and L-valine, respectively. In Salmonella typhi, this protein is Dihydroxy-acid dehydratase.